A 242-amino-acid chain; its full sequence is 1-(5-phosphoribosyl)-5-[(5-phosphoribosylamino)methylideneamino] imidazole-4-carboxamide isomerase (242 aa).

The active-site Proton acceptor is the Asp7. Asp129 functions as the Proton donor in the catalytic mechanism.

It belongs to the HisA/HisF family.

Its subcellular location is the cytoplasm. It catalyses the reaction 1-(5-phospho-beta-D-ribosyl)-5-[(5-phospho-beta-D-ribosylamino)methylideneamino]imidazole-4-carboxamide = 5-[(5-phospho-1-deoxy-D-ribulos-1-ylimino)methylamino]-1-(5-phospho-beta-D-ribosyl)imidazole-4-carboxamide. Its pathway is amino-acid biosynthesis; L-histidine biosynthesis; L-histidine from 5-phospho-alpha-D-ribose 1-diphosphate: step 4/9. The protein is 1-(5-phosphoribosyl)-5-[(5-phosphoribosylamino)methylideneamino] imidazole-4-carboxamide isomerase of Pseudoalteromonas translucida (strain TAC 125).